We begin with the raw amino-acid sequence, 202 residues long: Small ribosomal subunit protein uS4c (202 aa).

In terms of domain architecture, S4 RNA-binding spans 90–153; sequence MRLDNVIFRL…KSEAIISKNI (64 aa).

The protein belongs to the universal ribosomal protein uS4 family. In terms of assembly, part of the 30S ribosomal subunit. Contacts protein S5. The interaction surface between S4 and S5 is involved in control of translational fidelity.

Its subcellular location is the plastid. The protein localises to the chloroplast. Its function is as follows. One of the primary rRNA binding proteins, it binds directly to 16S rRNA where it nucleates assembly of the body of the 30S subunit. With S5 and S12 plays an important role in translational accuracy. The chain is Small ribosomal subunit protein uS4c (rps4) from Cyathophorum bulbosum (Moss).